The sequence spans 510 residues: Fumarate hydratase, mitochondrial (510 aa).

The transit peptide at 1 to 44 directs the protein to the mitochondrion; sequence MYRALRLLARSRPLVRAPAAALASAPGLGGAAVPSFWPPNAARM. 3 positions are modified to N6-acetyllysine; alternate: Lys61, Lys66, and Lys80. Lys61, Lys66, and Lys80 each carry N6-succinyllysine; alternate. Thr85 and Thr90 each carry phosphothreonine. Lys94 carries the post-translational modification N6-acetyllysine. An N6-acetyllysine; alternate mark is found at Lys115 and Lys122. N6-succinyllysine; alternate is present on residues Lys115 and Lys122. Residues 145-147, 176-179, and 186-188 each bind substrate; these read SGT, HPND, and SSN. Lys213 carries the N6-acetyllysine modification. Lys223 is subject to N6-acetyllysine; alternate. Residue Lys223 is modified to N6-succinyllysine; alternate. Thr234 is a substrate binding site. His235 (proton donor/acceptor) is an active-site residue. A Phosphothreonine; by PRKDC modification is found at Thr236. The residue at position 256 (Lys256) is an N6-acetyllysine. Lys292 carries the N6-acetyllysine; alternate modification. Position 292 is an N6-succinyllysine; alternate (Lys292). The active site involves Ser365. Residues Ser366 and 371–373 each bind substrate; that span reads KVN. Phosphoserine is present on Ser366. N6-succinyllysine occurs at positions 467 and 473. Lys502 is modified (N6-acetyllysine).

The protein belongs to the class-II fumarase/aspartase family. Fumarase subfamily. Homotetramer. Interacts with H2AZ1. Post-translationally, phosphorylation at Thr-236 by PRKDC in response to DNA damage promotes translocation to the nucleus and recruitment to DNA double-strand breaks (DSBs). In terms of tissue distribution, expressed in red blood cells; underexpressed in red blood cells (cytoplasm) of patients with hereditary non-spherocytic hemolytic anemia of unknown etiology.

Its subcellular location is the mitochondrion. It is found in the cytoplasm. The protein resides in the cytosol. It localises to the nucleus. The protein localises to the chromosome. The enzyme catalyses (S)-malate = fumarate + H2O. The protein operates within carbohydrate metabolism; tricarboxylic acid cycle; (S)-malate from fumarate: step 1/1. Catalyzes the reversible stereospecific interconversion of fumarate to L-malate. Experiments in other species have demonstrated that specific isoforms of this protein act in defined pathways and favor one direction over the other. Functionally, catalyzes the hydration of fumarate to L-malate in the tricarboxylic acid (TCA) cycle to facilitate a transition step in the production of energy in the form of NADH. In terms of biological role, catalyzes the dehydration of L-malate to fumarate. Fumarate metabolism in the cytosol plays a role during urea cycle and arginine metabolism; fumarate being a by-product of the urea cycle and amino-acid catabolism. Also plays a role in DNA repair by promoting non-homologous end-joining (NHEJ). In response to DNA damage and phosphorylation by PRKDC, translocates to the nucleus and accumulates at DNA double-strand breaks (DSBs): acts by catalyzing formation of fumarate, an inhibitor of KDM2B histone demethylase activity, resulting in enhanced dimethylation of histone H3 'Lys-36' (H3K36me2). This is Fumarate hydratase, mitochondrial from Homo sapiens (Human).